The following is a 589-amino-acid chain: UvrABC system protein C (589 aa).

The region spanning 10–87 (ESSGVYLMKK…IKKYSPKYNI (78 aa)) is the GIY-YIG domain. The UVR domain occupies 197 to 232 (SKLINELTALMNKASQDMDFEKSIIYREQIKELKSI).

It belongs to the UvrC family. As to quaternary structure, interacts with UvrB in an incision complex.

The protein localises to the cytoplasm. In terms of biological role, the UvrABC repair system catalyzes the recognition and processing of DNA lesions. UvrC both incises the 5' and 3' sides of the lesion. The N-terminal half is responsible for the 3' incision and the C-terminal half is responsible for the 5' incision. In Fusobacterium nucleatum subsp. nucleatum (strain ATCC 25586 / DSM 15643 / BCRC 10681 / CIP 101130 / JCM 8532 / KCTC 2640 / LMG 13131 / VPI 4355), this protein is UvrABC system protein C.